We begin with the raw amino-acid sequence, 465 residues long: Adenosylhomocysteinase (465 aa).

Residues T56, D131, and E191 each coordinate substrate. Residue 192-194 (TTT) coordinates NAD(+). K221 and D225 together coordinate substrate. NAD(+)-binding positions include N226, 255 to 260 (GYGDVG), E278, N313, 334 to 336 (IGH), and N379.

This sequence belongs to the adenosylhomocysteinase family. NAD(+) serves as cofactor.

Its subcellular location is the cytoplasm. It carries out the reaction S-adenosyl-L-homocysteine + H2O = L-homocysteine + adenosine. The protein operates within amino-acid biosynthesis; L-homocysteine biosynthesis; L-homocysteine from S-adenosyl-L-homocysteine: step 1/1. Its function is as follows. May play a key role in the regulation of the intracellular concentration of adenosylhomocysteine. The protein is Adenosylhomocysteinase of Bartonella henselae (strain ATCC 49882 / DSM 28221 / CCUG 30454 / Houston 1) (Rochalimaea henselae).